The following is a 211-amino-acid chain: SOSS complex subunit B2 (211 aa).

Positions 27–97 (IVLEIGRVTK…TLYTGRGGDL (71 aa)) form a DNA-binding region, OB. A disordered region spans residues 125-211 (NQQNKTSKEQ…GRDPRRASKR (87 aa)). Residues 136–157 (GNSPPNQNAGNGTVPVFSNNNA) show a composition bias toward polar residues. Pro residues predominate over residues 179 to 195 (NGPPPVTAGGTPAPPKP).

The protein belongs to the SOSS-B family. SOSS-B2 subfamily. As to quaternary structure, component of the SOSS complex, composed of soss-b (soss-b1/nabp2 or soss-b2/nabp1), soss-a/ints3 and soss-c/inip. SOSS complexes containing soss-b1/nabp2 are more abundant than complexes containing soss-b2/nabp1.

It localises to the nucleus. Functionally, component of the SOSS complex, a multiprotein complex that functions downstream of the MRN complex to promote DNA repair and G2/M checkpoint. In the SOSS complex, acts as a sensor of single-stranded DNA that binds to single-stranded DNA. The SOSS complex associates with DNA lesions and influences diverse endpoints in the cellular DNA damage response including cell-cycle checkpoint activation, recombinational repair and maintenance of genomic stability. Required for efficient homologous recombination-dependent repair of double-strand breaks (DSBs). This Danio rerio (Zebrafish) protein is SOSS complex subunit B2 (nabp1).